The chain runs to 368 residues: Apolipoprotein A-V (368 aa).

The N-terminal stretch at 1–20 is a signal peptide; sequence MAAVITWALALLAVFASTQA. Ser-52 carries the post-translational modification Phosphoserine. Positions 231 to 255 form a coiled coil; sequence TRKAKDLHTSIQRNLDQLRDELSAF. The disordered stretch occupies residues 305–333; sequence EEIQHQLAPPPPSHSAFAPELGHSDSNKA.

This sequence belongs to the apolipoprotein A1/A4/E family. As to quaternary structure, interacts with GPIHBP1. Interacts with SORL1; this interaction leads to APOA5 internalization and sorting either to lysosomes and degradation, or to the trans-Golgi network. In terms of processing, phosphorylated by FAM20C in the extracellular medium. In terms of tissue distribution, liver.

It is found in the secreted. It localises to the early endosome. The protein localises to the late endosome. The protein resides in the golgi apparatus. Its subcellular location is the trans-Golgi network. Minor apolipoprotein mainly associated with HDL and to a lesser extent with VLDL. May also be associated with chylomicrons. Important determinant of plasma triglyceride (TG) levels by both being a potent stimulator of apo-CII lipoprotein lipase (LPL) TG hydrolysis and an inhibitor of the hepatic VLDL-TG production rate (without affecting the VLDL-apoB production rate). Activates poorly lecithin:cholesterol acyltransferase (LCAT) and does not enhance efflux of cholesterol from macrophages. Binds heparin. The polypeptide is Apolipoprotein A-V (Apoa5) (Mus musculus (Mouse)).